A 264-amino-acid polypeptide reads, in one-letter code: Thymidylate synthase (264 aa).

Residue Arg21 participates in dUMP binding. His51 contributes to the (6R)-5,10-methylene-5,6,7,8-tetrahydrofolate binding site. 126-127 (RR) serves as a coordination point for dUMP. Cys146 acts as the Nucleophile in catalysis. DUMP-binding positions include 166–169 (RSAD), Asn177, and 207–209 (HIY). Asp169 serves as a coordination point for (6R)-5,10-methylene-5,6,7,8-tetrahydrofolate. Residue Ser263 coordinates (6R)-5,10-methylene-5,6,7,8-tetrahydrofolate.

The protein belongs to the thymidylate synthase family. Bacterial-type ThyA subfamily. As to quaternary structure, homodimer.

Its subcellular location is the cytoplasm. It catalyses the reaction dUMP + (6R)-5,10-methylene-5,6,7,8-tetrahydrofolate = 7,8-dihydrofolate + dTMP. Its pathway is pyrimidine metabolism; dTTP biosynthesis. Its function is as follows. Catalyzes the reductive methylation of 2'-deoxyuridine-5'-monophosphate (dUMP) to 2'-deoxythymidine-5'-monophosphate (dTMP) while utilizing 5,10-methylenetetrahydrofolate (mTHF) as the methyl donor and reductant in the reaction, yielding dihydrofolate (DHF) as a by-product. This enzymatic reaction provides an intracellular de novo source of dTMP, an essential precursor for DNA biosynthesis. This is Thymidylate synthase from Exiguobacterium sp. (strain ATCC BAA-1283 / AT1b).